We begin with the raw amino-acid sequence, 320 residues long: Ribose-phosphate pyrophosphokinase 3 (320 aa).

Residues Asp-131, His-133, Asp-142, and Asp-146 each contribute to the Mg(2+) site.

Belongs to the ribose-phosphate pyrophosphokinase family.

Its subcellular location is the cytoplasm. It carries out the reaction D-ribose 5-phosphate + ATP = 5-phospho-alpha-D-ribose 1-diphosphate + AMP + H(+). It functions in the pathway metabolic intermediate biosynthesis; 5-phospho-alpha-D-ribose 1-diphosphate biosynthesis; 5-phospho-alpha-D-ribose 1-diphosphate from D-ribose 5-phosphate (route I): step 1/1. Its function is as follows. 5-phosphoribose 1-diphosphate synthase involved in nucleotide, histidine, and tryptophan biosynthesis. Active in heteromultimeric complexes with other 5-phosphoribose 1-diphosphate synthases (PRS2, PRS3, PRS4 and PRS5). The protein is Ribose-phosphate pyrophosphokinase 3 (PRS3) of Saccharomyces cerevisiae (strain ATCC 204508 / S288c) (Baker's yeast).